A 247-amino-acid polypeptide reads, in one-letter code: Synaptonemal complex central element protein 1-like (247 aa).

The stretch at 71–196 (SEELGEAQAL…LQEARETWDS (126 aa)) forms a coiled coil. Positions 189-247 (EARETWDSPGNCGLKTELEELEGQSQRSPEAQNDKGEASQEEQHHLETSEELPRTGTLC) are disordered. Basic and acidic residues predominate over residues 220 to 241 (QNDKGEASQEEQHHLETSEELP).

The protein belongs to the SYCE family. As to expression, isoform 1 is abundantly expressed in testis and weakly in ovary, it is not found in other tissues. Isoform 2 is expressed in testis and poorly in brain, heart, lung and other examined tissues.

In terms of biological role, may be involved in meiosis. Isoform 1 may be involved in meiosis during spermatogenesis while isoform 2 is probably related to a later stage of meiosis, in the development stage of secondary spermatocytes and spermatids. This Mus musculus (Mouse) protein is Synaptonemal complex central element protein 1-like (Syce1l).